Here is a 355-residue protein sequence, read N- to C-terminus: Peptide chain release factor 1 (355 aa).

Gln-233 is modified (N5-methylglutamine).

This sequence belongs to the prokaryotic/mitochondrial release factor family. Methylated by PrmC. Methylation increases the termination efficiency of RF1.

The protein localises to the cytoplasm. Functionally, peptide chain release factor 1 directs the termination of translation in response to the peptide chain termination codons UAG and UAA. The polypeptide is Peptide chain release factor 1 (Desulforudis audaxviator (strain MP104C)).